The primary structure comprises 376 residues: PqqA peptide cyclase (376 aa).

The region spanning 7 to 222 (VGLPLWLLAE…TNEYRDKLKA (216 aa)) is the Radical SAM core domain. [4Fe-4S] cluster-binding residues include cysteine 21, cysteine 25, and cysteine 28.

This sequence belongs to the radical SAM superfamily. PqqE family. As to quaternary structure, interacts with PqqD. The interaction is necessary for activity of PqqE. [4Fe-4S] cluster is required as a cofactor.

The enzyme catalyses [PQQ precursor protein] + S-adenosyl-L-methionine = E-Y cross-linked-[PQQ precursor protein] + 5'-deoxyadenosine + L-methionine + H(+). Its pathway is cofactor biosynthesis; pyrroloquinoline quinone biosynthesis. Functionally, catalyzes the cross-linking of a glutamate residue and a tyrosine residue in the PqqA protein as part of the biosynthesis of pyrroloquinoline quinone (PQQ). The polypeptide is PqqA peptide cyclase (Pseudomonas putida (strain ATCC 47054 / DSM 6125 / CFBP 8728 / NCIMB 11950 / KT2440)).